A 377-amino-acid chain; its full sequence is MFKTTLCALLITASCSTFAAPQQINDIVHRTITPLIEQQKIPGMAVAVIYQGKPYYFTWGYADIAKKQPVTQQTLFELGSVSKTFTGVLGGDAIARGEIKLSDPTTKYWPELTAKQWNGITLLHLATYTAGGLPLQVPDEVKSSSDLLRFYQNWQPAWAPGTQRLYANSSIGLFGALAVKPSGLSFEQAMQTRVFQPLKLNHTWINVPPAEEKNYAWGYREGKAVHVSPGALDAEAYGVKSTIEDMARWVQSNLKPLDINEKTLQQGIQLAQSRYWQTGDMYQGLGWEMLDWPVNPDSIINGSDNKIALAARPVKAITPPTPAVRASWVHKTGATGGFGSYVAFIPEKELGIVMLANKNYPNPARVDAAWQILNALQ.

Positions 1-19 are cleaved as a signal peptide; that stretch reads MFKTTLCALLITASCSTFA. Ser80 acts as the Acyl-ester intermediate in catalysis. Residues Ser80, Gln136, Tyr166, Asn168, Ala334, and Asn359 each contribute to the a beta-lactam site.

The protein belongs to the class-C beta-lactamase family. Monomer.

The protein resides in the periplasm. The catalysed reaction is a beta-lactam + H2O = a substituted beta-amino acid. With respect to regulation, inhibited by the beta-lactamase-blocking agents avibactam, enmetazobactam, relebactam, nacubactam, vaborbactam, taniborbactam, zidebactam, and beta-lactam-analog boronic acids, via a covalent binding to Ser-80. Inhibited by non-beta-lactam, benzo(b)thiophene-2-boronic acid (BZBTH2B) and various cyclic boronates. Not inhibited by clavulanic acid. Inhibited by O-aryloxycarbonyl hydroxamates, via cross-linking of the active site Ser-80 to Lys-331. Weakly inhibited by citric acid. Functionally, class C beta-lactamase which confers resistance to penicillins and cephalosporins. Has benzylpenicillin- and cephaloridine-hydrolyzing activity. Has weak cefuroxime, cefotaxime, cefoxitin and oxacillin-hydrolyzing activities. The sequence is that of Beta-lactamase from Escherichia coli (strain K12).